We begin with the raw amino-acid sequence, 398 residues long: Phosphoglycerate kinase (398 aa).

Substrate contacts are provided by residues 21–23 (DFN), arginine 36, 59–62 (HLGR), arginine 119, and arginine 157. ATP contacts are provided by residues lysine 208, glycine 296, glutamate 327, and 354–357 (GGDS).

This sequence belongs to the phosphoglycerate kinase family. Monomer.

It is found in the cytoplasm. It carries out the reaction (2R)-3-phosphoglycerate + ATP = (2R)-3-phospho-glyceroyl phosphate + ADP. The protein operates within carbohydrate degradation; glycolysis; pyruvate from D-glyceraldehyde 3-phosphate: step 2/5. In Streptococcus pyogenes serotype M3 (strain ATCC BAA-595 / MGAS315), this protein is Phosphoglycerate kinase.